The following is a 202-amino-acid chain: Outer-membrane lipoprotein LolB (202 aa).

A signal peptide spans 1 to 24 (MESKEQHLIRQYFILAMFFLFLAG). A lipid anchor (N-palmitoyl cysteine) is attached at Cys-25. The S-diacylglycerol cysteine moiety is linked to residue Cys-25.

It belongs to the LolB family. In terms of assembly, monomer.

It is found in the cell outer membrane. Functionally, plays a critical role in the incorporation of lipoproteins in the outer membrane after they are released by the LolA protein. The protein is Outer-membrane lipoprotein LolB of Pseudoalteromonas translucida (strain TAC 125).